Reading from the N-terminus, the 200-residue chain is NAD(P)H dehydrogenase (quinone) (200 aa).

In terms of domain architecture, Flavodoxin-like spans 4–191 (VLVLYYSSYG…DIARYQGKHV (188 aa)). Residues 10 to 15 (SSYGHV) and 79 to 81 (TRF) each bind FMN. Tyr-12 is a binding site for NAD(+). Trp-99 provides a ligand contact to substrate. Residues 114–120 (STGTQHG) and His-135 contribute to the FMN site.

Belongs to the WrbA family. Requires FMN as cofactor.

It catalyses the reaction a quinone + NADH + H(+) = a quinol + NAD(+). The enzyme catalyses a quinone + NADPH + H(+) = a quinol + NADP(+). The polypeptide is NAD(P)H dehydrogenase (quinone) (Burkholderia orbicola (strain MC0-3)).